The following is a 282-amino-acid chain: Acetyl-coenzyme A carboxylase carboxyl transferase subunit beta (282 aa).

Positions 23-282 (IWTKCGQCDA…MLSKLHHQQA (260 aa)) constitute a CoA carboxyltransferase N-terminal domain. Zn(2+) contacts are provided by C27, C30, C46, and C49. The segment at 27–49 (CGQCDAVLYKTELEKQLGVCPKC) adopts a C4-type zinc-finger fold.

It belongs to the AccD/PCCB family. As to quaternary structure, acetyl-CoA carboxylase is a heterohexamer composed of biotin carboxyl carrier protein (AccB), biotin carboxylase (AccC) and two subunits each of ACCase subunit alpha (AccA) and ACCase subunit beta (AccD). It depends on Zn(2+) as a cofactor.

The protein localises to the cytoplasm. It catalyses the reaction N(6)-carboxybiotinyl-L-lysyl-[protein] + acetyl-CoA = N(6)-biotinyl-L-lysyl-[protein] + malonyl-CoA. The protein operates within lipid metabolism; malonyl-CoA biosynthesis; malonyl-CoA from acetyl-CoA: step 1/1. Its function is as follows. Component of the acetyl coenzyme A carboxylase (ACC) complex. Biotin carboxylase (BC) catalyzes the carboxylation of biotin on its carrier protein (BCCP) and then the CO(2) group is transferred by the transcarboxylase to acetyl-CoA to form malonyl-CoA. This chain is Acetyl-coenzyme A carboxylase carboxyl transferase subunit beta, found in Pseudoalteromonas atlantica (strain T6c / ATCC BAA-1087).